The primary structure comprises 476 residues: Bifunctional protein HldE (476 aa).

The interval methionine 1 to serine 319 is ribokinase. Position 195 to 198 (asparagine 195 to glutamate 198) interacts with ATP. The active site involves aspartate 264. The cytidylyltransferase stretch occupies residues methionine 345–glutamine 476.

The protein in the N-terminal section; belongs to the carbohydrate kinase PfkB family. In the C-terminal section; belongs to the cytidylyltransferase family. Homodimer.

It catalyses the reaction D-glycero-beta-D-manno-heptose 7-phosphate + ATP = D-glycero-beta-D-manno-heptose 1,7-bisphosphate + ADP + H(+). The catalysed reaction is D-glycero-beta-D-manno-heptose 1-phosphate + ATP + H(+) = ADP-D-glycero-beta-D-manno-heptose + diphosphate. It participates in nucleotide-sugar biosynthesis; ADP-L-glycero-beta-D-manno-heptose biosynthesis; ADP-L-glycero-beta-D-manno-heptose from D-glycero-beta-D-manno-heptose 7-phosphate: step 1/4. Its pathway is nucleotide-sugar biosynthesis; ADP-L-glycero-beta-D-manno-heptose biosynthesis; ADP-L-glycero-beta-D-manno-heptose from D-glycero-beta-D-manno-heptose 7-phosphate: step 3/4. Catalyzes the phosphorylation of D-glycero-D-manno-heptose 7-phosphate at the C-1 position to selectively form D-glycero-beta-D-manno-heptose-1,7-bisphosphate. Functionally, catalyzes the ADP transfer from ATP to D-glycero-beta-D-manno-heptose 1-phosphate, yielding ADP-D-glycero-beta-D-manno-heptose. The polypeptide is Bifunctional protein HldE (Shewanella sp. (strain ANA-3)).